A 328-amino-acid chain; its full sequence is DNA-directed RNA polymerase subunit alpha (328 aa).

Residues 1–230 (MSNHGLQMPE…DHVSFFIQLE (230 aa)) are alpha N-terminal domain (alpha-NTD). The tract at residues 248-328 (RIRELLAQPV…EEYLEEKKAS (81 aa)) is alpha C-terminal domain (alpha-CTD).

The protein belongs to the RNA polymerase alpha chain family. As to quaternary structure, homodimer. The RNAP catalytic core consists of 2 alpha, 1 beta, 1 beta' and 1 omega subunit. When a sigma factor is associated with the core the holoenzyme is formed, which can initiate transcription.

The catalysed reaction is RNA(n) + a ribonucleoside 5'-triphosphate = RNA(n+1) + diphosphate. Its function is as follows. DNA-dependent RNA polymerase catalyzes the transcription of DNA into RNA using the four ribonucleoside triphosphates as substrates. This chain is DNA-directed RNA polymerase subunit alpha, found in Salinibacter ruber (strain DSM 13855 / M31).